A 100-amino-acid polypeptide reads, in one-letter code: Protein E7 (100 aa).

Positions 1 to 43 (MIGKQATLRDIVLEELVQPIDLHCHEELPDLPEDIEASVVEEE) are E7 terminal domain. The LXCXE motif; interaction with host RB1 and TMEM173/STING signature appears at 22–26 (LHCHE). Residues 55-91 (CGGCEVRLKLYVWATDAGIRNLQDCLLGDVRLLCPTC) fold into a zinc finger. Residues 73 to 81 (IRNLQDCLL) carry the Nuclear export signal motif.

It belongs to the papillomaviridae E7 protein family. In terms of assembly, homodimer. Homooligomer. Interacts with host RB1; this interaction induces dissociation of RB1-E2F1 complex thereby disrupting RB1 activity. Interacts with host EP300; this interaction represses EP300 transcriptional activity. Interacts with protein E2; this interaction inhibits E7 oncogenic activity. Interacts with host TMEM173/STING; this interaction impairs the ability of TMEM173/STING to sense cytosolic DNA and promote the production of type I interferon (IFN-alpha and IFN-beta). Highly phosphorylated.

It localises to the host cytoplasm. It is found in the host nucleus. Its function is as follows. Plays a role in viral genome replication by driving entry of quiescent cells into the cell cycle. Stimulation of progression from G1 to S phase allows the virus to efficiently use the cellular DNA replicating machinery to achieve viral genome replication. E7 protein has both transforming and trans-activating activities. Induces the disassembly of the E2F1 transcription factor from RB1, with subsequent transcriptional activation of E2F1-regulated S-phase genes. Interferes with host histone deacetylation mediated by HDAC1 and HDAC2, leading to transcription activation. Also plays a role in the inhibition of both antiviral and antiproliferative functions of host interferon alpha. Interaction with host TMEM173/STING impairs the ability of TMEM173/STING to sense cytosolic DNA and promote the production of type I interferon (IFN-alpha and IFN-beta). The protein is Protein E7 of Homo sapiens (Human).